The sequence spans 82 residues: ATP synthase subunit c, chloroplastic (82 aa).

A run of 2 helical transmembrane segments spans residues 3-23 (PIISAASVIAAGLAVGLAAIG) and 57-77 (LAFMESLTIYGLVVALSLLFA).

The protein belongs to the ATPase C chain family. In terms of assembly, F-type ATPases have 2 components, F(1) - the catalytic core - and F(0) - the membrane proton channel. F(1) has five subunits: alpha(3), beta(3), gamma(1), delta(1), epsilon(1). F(0) has four main subunits: a(1), b(1), b'(1) and c(10-14). The alpha and beta chains form an alternating ring which encloses part of the gamma chain. F(1) is attached to F(0) by a central stalk formed by the gamma and epsilon chains, while a peripheral stalk is formed by the delta, b and b' chains.

Its subcellular location is the plastid. It localises to the chloroplast thylakoid membrane. Its function is as follows. F(1)F(0) ATP synthase produces ATP from ADP in the presence of a proton or sodium gradient. F-type ATPases consist of two structural domains, F(1) containing the extramembraneous catalytic core and F(0) containing the membrane proton channel, linked together by a central stalk and a peripheral stalk. During catalysis, ATP synthesis in the catalytic domain of F(1) is coupled via a rotary mechanism of the central stalk subunits to proton translocation. Functionally, key component of the F(0) channel; it plays a direct role in translocation across the membrane. A homomeric c-ring of between 10-14 subunits forms the central stalk rotor element with the F(1) delta and epsilon subunits. This is ATP synthase subunit c, chloroplastic from Cyanidium caldarium (Red alga).